The chain runs to 239 residues: Flagellin B3 (239 aa).

A propeptide spanning residues 1 to 11 (MLKNFMKNKKG) is cleaved from the precursor. N-linked (GlcNAc...) asparagine glycosylation is found at N115 and N128.

The protein belongs to the archaeal flagellin family. Post-translationally, N-linked glycans consist of the 779 Da trisaccharide beta-ManNAc(Thr)-(1-4)-beta-GlcNAc3NAcA-(1-3)-beta-GlcNAc.

Its subcellular location is the archaeal flagellum. Flagellin is the subunit protein which polymerizes to form the filaments of archaeal flagella. This chain is Flagellin B3 (flaB3), found in Methanococcus voltae.